The following is a 104-amino-acid chain: Thioredoxin (104 aa).

The Thioredoxin domain maps to 2–104; sequence AIVKVTDADF…NLAEVLDKHL (103 aa). C29 and C32 are oxidised to a cystine.

The protein belongs to the thioredoxin family.

In terms of biological role, component of the thioredoxin-thioredoxin reductase system. Participates in various redox reactions through the reversible oxidation of its active center dithiol to a disulfide and catalyzes dithiol-disulfide exchange reactions. This chain is Thioredoxin (trxA), found in Staphylococcus aureus (strain N315).